The sequence spans 323 residues: MKMHQLRYIVEIVNQNLNVTEAANALYTSQPGISKQVRLLEDELGLEIFERHGKHIKSITPAGKKIISIARELLVKAQGIRAVADEYTRPNHGVLRIATTNTQARYMLPSVIERFSKKYPDVSLHIHQGSPTQIHDALMSGEVDLAITTEAPYLFDDLVQIPCYWWNRAVIVSPEHPLAKVKELTIEELGKYPLVTYTFGFTGVSDLDYAFNSAGILPNIVFTATDADVIKTYVRLGLGVGIMASMAHTALDTDLVLIDASHLFRPSMTNIAFKHSTFLRNYMYDFMEYFSPHLTRSVVEKAERLRDNNSVKKLFEGIELETK.

An HTH lysR-type domain is found at 1-60 (MKMHQLRYIVEIVNQNLNVTEAANALYTSQPGISKQVRLLEDELGLEIFERHGKHIKSIT). Residues 19-38 (VTEAANALYTSQPGISKQVR) constitute a DNA-binding region (H-T-H motif).

The protein belongs to the LysR transcriptional regulatory family. As to quaternary structure, homotetramer.

It localises to the cytoplasm. This protein is a positive regulator of gene expression for the cysteine regulon. The inducer for CysB is N-acetylserine. In Haemophilus influenzae (strain ATCC 51907 / DSM 11121 / KW20 / Rd), this protein is HTH-type transcriptional regulator CysB (cysB).